The primary structure comprises 186 residues: MKTDAIELGVAKDSTPIGGANRGVSILDFILRLVALVGTLASAILMGTTNETLPFATQFIRFRAEYDDLPTFTFFVVANIVVSGYLLLSLPLSIVNIVRSTAKNRRIILIIFDTAMLALLTAGASAAAAIVYLAHKGNTRANWFAICQQFNSFCERISGSLIGSFVGVAVFILLILMSASALSRRN.

Topologically, residues 1-25 (MKTDAIELGVAKDSTPIGGANRGVS) are cytoplasmic. The chain crosses the membrane as a helical span at residues 26–46 (ILDFILRLVALVGTLASAILM). The Extracellular portion of the chain corresponds to 47-73 (GTTNETLPFATQFIRFRAEYDDLPTFT). Asn-50 carries N-linked (GlcNAc...) asparagine glycosylation. A helical transmembrane segment spans residues 74–94 (FFVVANIVVSGYLLLSLPLSI). At 95-106 (VNIVRSTAKNRR) the chain is on the cytoplasmic side. Residues 107 to 127 (IILIIFDTAMLALLTAGASAA) traverse the membrane as a helical segment. The Extracellular portion of the chain corresponds to 128 to 156 (AAIVYLAHKGNTRANWFAICQQFNSFCER). A helical transmembrane segment spans residues 157–177 (ISGSLIGSFVGVAVFILLILM). Residues 178–186 (SASALSRRN) are Cytoplasmic-facing.

The protein belongs to the Casparian strip membrane proteins (CASP) family. In terms of assembly, homodimer and heterodimers.

It localises to the cell membrane. In terms of biological role, regulates membrane-cell wall junctions and localized cell wall deposition. Required for establishment of the Casparian strip membrane domain (CSD) and the subsequent formation of Casparian strips, a cell wall modification of the root endodermis that determines an apoplastic barrier between the intraorganismal apoplasm and the extraorganismal apoplasm and prevents lateral diffusion. This is Casparian strip membrane protein 5 from Ricinus communis (Castor bean).